The sequence spans 200 residues: Holliday junction branch migration complex subunit RuvA (200 aa).

The domain I stretch occupies residues 1–63 (MIASVRGVVT…EDSLTLYGFA (63 aa)). Residues 64-142 (DDDAKALFEL…PVPVGADSAA (79 aa)) form a domain II region. Residues 143–151 (GVTTGAWPE) form a flexible linker region. The tract at residues 151-200 (EQVRQALVGLGWTAAQADQAVTAVAETVDGAVPPVPVLLRQAIRLLGRTR) is domain III.

This sequence belongs to the RuvA family. Homotetramer. Forms an RuvA(8)-RuvB(12)-Holliday junction (HJ) complex. HJ DNA is sandwiched between 2 RuvA tetramers; dsDNA enters through RuvA and exits via RuvB. An RuvB hexamer assembles on each DNA strand where it exits the tetramer. Each RuvB hexamer is contacted by two RuvA subunits (via domain III) on 2 adjacent RuvB subunits; this complex drives branch migration. In the full resolvosome a probable DNA-RuvA(4)-RuvB(12)-RuvC(2) complex forms which resolves the HJ.

It is found in the cytoplasm. Functionally, the RuvA-RuvB-RuvC complex processes Holliday junction (HJ) DNA during genetic recombination and DNA repair, while the RuvA-RuvB complex plays an important role in the rescue of blocked DNA replication forks via replication fork reversal (RFR). RuvA specifically binds to HJ cruciform DNA, conferring on it an open structure. The RuvB hexamer acts as an ATP-dependent pump, pulling dsDNA into and through the RuvAB complex. HJ branch migration allows RuvC to scan DNA until it finds its consensus sequence, where it cleaves and resolves the cruciform DNA. The protein is Holliday junction branch migration complex subunit RuvA of Salinispora tropica (strain ATCC BAA-916 / DSM 44818 / JCM 13857 / NBRC 105044 / CNB-440).